The chain runs to 305 residues: tRNA dimethylallyltransferase (305 aa).

An ATP-binding site is contributed by 14–21 (GPTASGKS). A substrate-binding site is contributed by 16 to 21 (TASGKS). Residues 39–42 (DSMQ) form an interaction with substrate tRNA region.

This sequence belongs to the IPP transferase family. In terms of assembly, monomer. The cofactor is Mg(2+).

The enzyme catalyses adenosine(37) in tRNA + dimethylallyl diphosphate = N(6)-dimethylallyladenosine(37) in tRNA + diphosphate. Functionally, catalyzes the transfer of a dimethylallyl group onto the adenine at position 37 in tRNAs that read codons beginning with uridine, leading to the formation of N6-(dimethylallyl)adenosine (i(6)A). The sequence is that of tRNA dimethylallyltransferase from Bradyrhizobium sp. (strain BTAi1 / ATCC BAA-1182).